Reading from the N-terminus, the 397-residue chain is RNA binding protein fox-1 homolog 1 (397 aa).

The tract at residues 1–121 (MNCEREQLRG…NKSQPKRLHV (121 aa)) is disordered. The segment covering 70-87 (QTHSEQSPADTSAQTVSG) has biased composition (polar residues). Over residues 88–99 (TATQTDDAAPTD) the composition is skewed to low complexity. The segment covering 100–113 (GQPQTQPSENTENK) has biased composition (polar residues). The RRM domain occupies 117–193 (KRLHVSNIPF…RKIEVNNATA (77 aa)). At arginine 317 the chain carries Asymmetric dimethylarginine. The residue at position 388 (arginine 388) is an Omega-N-methylarginine.

Binds to the C-terminus of ATXN2. As to expression, predominantly expressed in muscle and brain.

It is found in the nucleus. The protein resides in the cytoplasm. Its function is as follows. RNA-binding protein that regulates alternative splicing events by binding to 5'-UGCAUGU-3' elements. Regulates alternative splicing of tissue-specific exons and of differentially spliced exons during erythropoiesis. In Homo sapiens (Human), this protein is RNA binding protein fox-1 homolog 1 (RBFOX1).